Reading from the N-terminus, the 238-residue chain is NAD(P)H-quinone oxidoreductase subunit K 1 (238 aa).

4 residues coordinate [4Fe-4S] cluster: C54, C55, C119, and C150.

It belongs to the complex I 20 kDa subunit family. As to quaternary structure, NDH-1 can be composed of about 15 different subunits; different subcomplexes with different compositions have been identified which probably have different functions. It depends on [4Fe-4S] cluster as a cofactor.

It is found in the cellular thylakoid membrane. The catalysed reaction is a plastoquinone + NADH + (n+1) H(+)(in) = a plastoquinol + NAD(+) + n H(+)(out). The enzyme catalyses a plastoquinone + NADPH + (n+1) H(+)(in) = a plastoquinol + NADP(+) + n H(+)(out). In terms of biological role, NDH-1 shuttles electrons from an unknown electron donor, via FMN and iron-sulfur (Fe-S) centers, to quinones in the respiratory and/or the photosynthetic chain. The immediate electron acceptor for the enzyme in this species is believed to be plastoquinone. Couples the redox reaction to proton translocation, and thus conserves the redox energy in a proton gradient. Cyanobacterial NDH-1 also plays a role in inorganic carbon-concentration. The protein is NAD(P)H-quinone oxidoreductase subunit K 1 of Cyanothece sp. (strain PCC 7425 / ATCC 29141).